We begin with the raw amino-acid sequence, 169 residues long: EP300-interacting inhibitor of differentiation 1 (169 aa).

The tract at residues 31–50 (GRGARGPAPEEGPMEEEAGP) is disordered. The interaction with NR0B2 stretch occupies residues 54–120 (RAQRGLFPEA…AGDALDGGFQ (67 aa)). The short motif at 150–154 (LGCDE) is the LXCXE motif element.

In terms of assembly, interacts via its LXCXE motif with the entire pocket region of RB1. Interacts with EP300, NR0B2 and TRIM27. As to expression, expressed in all adult tissues examined and during embryogenesis.

Its subcellular location is the nucleus. The protein localises to the cytoplasm. Its function is as follows. Interacts with RB1 and EP300 and acts as a repressor of MYOD1 transactivation. Inhibits EP300 and CBP histone acetyltransferase activity. May be involved in coupling cell cycle exit to the transcriptional activation of genes required for cellular differentiation. May act as a candidate coinhibitory factor for NR0B2 that can be directly linked to transcription inhibitory mechanisms. The chain is EP300-interacting inhibitor of differentiation 1 from Mus musculus (Mouse).